We begin with the raw amino-acid sequence, 291 residues long: ATP phosphoribosyltransferase (291 aa).

It belongs to the ATP phosphoribosyltransferase family. Long subfamily. Mg(2+) serves as cofactor.

It localises to the cytoplasm. The enzyme catalyses 1-(5-phospho-beta-D-ribosyl)-ATP + diphosphate = 5-phospho-alpha-D-ribose 1-diphosphate + ATP. The protein operates within amino-acid biosynthesis; L-histidine biosynthesis; L-histidine from 5-phospho-alpha-D-ribose 1-diphosphate: step 1/9. With respect to regulation, feedback inhibited by histidine. In terms of biological role, catalyzes the condensation of ATP and 5-phosphoribose 1-diphosphate to form N'-(5'-phosphoribosyl)-ATP (PR-ATP). Has a crucial role in the pathway because the rate of histidine biosynthesis seems to be controlled primarily by regulation of HisG enzymatic activity. In Geotalea daltonii (strain DSM 22248 / JCM 15807 / FRC-32) (Geobacter daltonii), this protein is ATP phosphoribosyltransferase.